Here is a 315-residue protein sequence, read N- to C-terminus: CID domain-containing protein 1 (315 aa).

A CID domain is found at 1-135; it reads MADFTEQTLR…RLHEVHQQVK (135 aa). Residues 227-273 are a coiled coil; it reads MLEEYVKRLKNETNERETLESNLNMLIENVRMSIEHHEKLCREVKRR.

This is CID domain-containing protein 1 (cids-1) from Caenorhabditis elegans.